The sequence spans 391 residues: Thioredoxin-interacting protein (391 aa).

A Glycyl lysine isopeptide (Lys-Gly) (interchain with G-Cter in ubiquitin) cross-link involves residue Lys-212. Ser-361 is subject to Phosphoserine.

It belongs to the arrestin family. Homodimer; disulfide-linked. Interacts with TXN/thioredoxin through its redox-active site. Interacts with transcriptional repressors ZBTB16, ZBTB32 and HDAC1. Interacts with DDIT4. Post-translationally, ubiquitinated; undergoes heterotypic 'Lys-48'-/'Lys-63'-branched polyubiquitination catalyzed by ITCH and UBR5 resulting in proteasomal degradation. Deubiquitinated by USP5, leading to TXNIP stabilization.

The protein resides in the cytoplasm. Its function is as follows. May act as an oxidative stress mediator by inhibiting thioredoxin activity or by limiting its bioavailability. Interacts with COPS5 and restores COPS5-induced suppression of CDKN1B stability, blocking the COPS5-mediated translocation of CDKN1B from the nucleus to the cytoplasm. Functions as a transcriptional repressor, possibly by acting as a bridge molecule between transcription factors and corepressor complexes, and over-expression will induce G0/G1 cell cycle arrest. Required for the maturation of natural killer cells. Acts as a suppressor of tumor cell growth. Inhibits the proteasomal degradation of DDIT4, and thereby contributes to the inhibition of the mammalian target of rapamycin complex 1 (mTORC1). This Sus scrofa (Pig) protein is Thioredoxin-interacting protein (TXNIP).